The sequence spans 337 residues: GTP 3',8-cyclase (337 aa).

In terms of domain architecture, Radical SAM core spans 17–243 (PFQRQYYYLR…HKSHTDGPAK (227 aa)). Arginine 26 contacts GTP. 2 residues coordinate [4Fe-4S] cluster: cysteine 33 and cysteine 37. Tyrosine 39 is a binding site for S-adenosyl-L-methionine. Cysteine 40 lines the [4Fe-4S] cluster pocket. Residue arginine 76 coordinates GTP. Glycine 80 is an S-adenosyl-L-methionine binding site. Residue threonine 107 coordinates GTP. Position 131 (serine 131) interacts with S-adenosyl-L-methionine. GTP is bound at residue lysine 168. S-adenosyl-L-methionine is bound at residue methionine 202. Cysteine 265 and cysteine 268 together coordinate [4Fe-4S] cluster. 270–272 (RLR) contributes to the GTP binding site. Cysteine 282 is a [4Fe-4S] cluster binding site.

It belongs to the radical SAM superfamily. MoaA family. Monomer and homodimer. [4Fe-4S] cluster serves as cofactor.

It catalyses the reaction GTP + AH2 + S-adenosyl-L-methionine = (8S)-3',8-cyclo-7,8-dihydroguanosine 5'-triphosphate + 5'-deoxyadenosine + L-methionine + A + H(+). The protein operates within cofactor biosynthesis; molybdopterin biosynthesis. Functionally, catalyzes the cyclization of GTP to (8S)-3',8-cyclo-7,8-dihydroguanosine 5'-triphosphate. This Haemophilus influenzae (strain PittGG) protein is GTP 3',8-cyclase.